Here is a 649-residue protein sequence, read N- to C-terminus: Extracellular metalloproteinase 4 (649 aa).

The first 18 residues, 1-18, serve as a signal peptide directing secretion; sequence MHGLLLAGLLALPSNVLG. Positions 19–260 are excised as a propeptide; the sequence is HPAEPPNSVN…VHGVVDYVAS (242 aa). Residue H443 coordinates Zn(2+). The active site involves E444. Residue H447 participates in Zn(2+) binding. Residues N494 and N609 are each glycosylated (N-linked (GlcNAc...) asparagine).

This sequence belongs to the peptidase M36 family. Zn(2+) is required as a cofactor.

The protein localises to the secreted. Its function is as follows. Secreted metalloproteinase probably acting as a virulence factor. This chain is Extracellular metalloproteinase 4 (MEP4), found in Arthroderma otae (strain ATCC MYA-4605 / CBS 113480) (Microsporum canis).